A 417-amino-acid polypeptide reads, in one-letter code: Serine hydroxymethyltransferase (417 aa).

Residues Leu121 and 125–127 contribute to the (6S)-5,6,7,8-tetrahydrofolate site; that span reads GHL. The residue at position 229 (Lys229) is an N6-(pyridoxal phosphate)lysine. 355–357 is a (6S)-5,6,7,8-tetrahydrofolate binding site; the sequence is SPF.

Belongs to the SHMT family. As to quaternary structure, homodimer. Requires pyridoxal 5'-phosphate as cofactor.

It localises to the cytoplasm. The enzyme catalyses (6R)-5,10-methylene-5,6,7,8-tetrahydrofolate + glycine + H2O = (6S)-5,6,7,8-tetrahydrofolate + L-serine. The protein operates within one-carbon metabolism; tetrahydrofolate interconversion. Its pathway is amino-acid biosynthesis; glycine biosynthesis; glycine from L-serine: step 1/1. In terms of biological role, catalyzes the reversible interconversion of serine and glycine with tetrahydrofolate (THF) serving as the one-carbon carrier. This reaction serves as the major source of one-carbon groups required for the biosynthesis of purines, thymidylate, methionine, and other important biomolecules. Also exhibits THF-independent aldolase activity toward beta-hydroxyamino acids, producing glycine and aldehydes, via a retro-aldol mechanism. This is Serine hydroxymethyltransferase from Xanthomonas oryzae pv. oryzae (strain MAFF 311018).